Reading from the N-terminus, the 848-residue chain is Leucine--tRNA ligase (848 aa).

Residues 1 to 21 form a disordered region; it reads MTENTPGTSAPERFDPATADT. A 'HIGH' region motif is present at residues 51–61; the sequence is PYPSGRIHIGH. Positions 625–629 match the 'KMSKS' region motif; the sequence is KMSKS. Residue K628 participates in ATP binding.

This sequence belongs to the class-I aminoacyl-tRNA synthetase family.

It localises to the cytoplasm. The catalysed reaction is tRNA(Leu) + L-leucine + ATP = L-leucyl-tRNA(Leu) + AMP + diphosphate. In Novosphingobium aromaticivorans (strain ATCC 700278 / DSM 12444 / CCUG 56034 / CIP 105152 / NBRC 16084 / F199), this protein is Leucine--tRNA ligase.